The primary structure comprises 422 residues: Transcription initiation factor TFIID subunit 15b (422 aa).

4 disordered regions span residues 1–24 (MAGMYNQDGGGGAPIPSYGGDGYG), 47–94 (YGGR…PNPS), 111–263 (ALAP…DAAT), and 368–422 (MAEK…SRPY). Gly residues-rich tracts occupy residues 8–24 (DGGGGAPIPSYGGDGYG) and 47–83 (YGGRGGYGGGGGRGNRGGGGGGYQGGDRGGRGSGGGG). The segment at 84-115 (RDGDWRCPNPSCGNVNFARRVECNKCGALAPS) adopts a RanBP2-type zinc-finger fold. The span at 123–133 (DRGGGGYSRGG) shows a compositional bias: gly residues. Basic and acidic residues predominate over residues 134–156 (GDSDRGGGRGGRNDSGRSYESSR). Gly residues-rich tracts occupy residues 219–229 (PSYGGPRGGYG) and 236–247 (GGRGGRSGGYDG). Over residues 252-263 (RRQEASYEDAAT) the composition is skewed to basic and acidic residues. The 92-residue stretch at 280–371 (ARIYISNLPP…NKISVTMAEK (92 aa)) folds into the RRM domain. Residues 382-397 (RGGGRGGGGGGYGGGG) show a composition bias toward gly residues.

Belongs to the TAF15 family. Component of the TFIID complex. TFIID is composed of TATA binding protein (TBP) and a number of TBP-associated factors (TAFs) whose MWs range from 14-217 kDa. Interacts with TAF4, TAF4B, TAF5, TAF12B and TAF14. As to expression, expressed in roots, leaves and inflorescences.

Its subcellular location is the nucleus. TAFs are components of the transcription factor IID (TFIID) complex that is essential for mediating regulation of RNA polymerase transcription. This chain is Transcription initiation factor TFIID subunit 15b (TAF15B), found in Arabidopsis thaliana (Mouse-ear cress).